A 645-amino-acid polypeptide reads, in one-letter code: Homeobox protein B-H2 (645 aa).

Disordered regions lie at residues 1-50 (MTTM…TTAT), 86-134 (SSGG…QAAL), 149-176 (REREREREREHYRERHSPPGNNPYAHHP), 240-259 (SHLSHQQHHPHLHHPMHDER), 265-385 (MLQQ…KART), and 553-645 (GAQQ…ALEV). The segment covering 18–29 (SAPSATAHHPAA) has biased composition (low complexity). The span at 106–121 (QHHHHHQQQQQHHHHQ) shows a compositional bias: basic residues. Residues 122 to 134 (QQQQQQQHQQAAL) show a composition bias toward low complexity. Residues 149–165 (REREREREREHYRERHS) are compositionally biased toward basic and acidic residues. Basic residues predominate over residues 244 to 253 (HQQHHPHLHH). The span at 275–316 (NNNNNNNNSSSASNNNNNNNNSASANSNIISGNSSSSNNNNG) shows a compositional bias: low complexity. The segment covering 317-328 (SGNGNMLLGGPG) has biased composition (gly residues). A compositionally biased stretch (polar residues) spans 329 to 339 (SSISGDQASTI). Positions 362–377 (SSANGDSSSHLSLSLS) are enriched in low complexity. Residues 380–439 (QRKARTAFTDHQLQTLEKSFERQKYLSVQDRMELANKLELSDCQVKTWYQNRRTKWKRQT) constitute a DNA-binding region (homeobox). Residues 553–574 (GAQQQQQQPPAASRSPATSQSA) show a composition bias toward low complexity. Over residues 583 to 592 (TSSSSRQRLI) the composition is skewed to polar residues. A Phosphothreonine modification is found at Thr-593. Residues 594–603 (PSPPLNPGSP) are compositionally biased toward pro residues. Phosphoserine occurs at positions 595 and 602. Residues 618 to 632 (DEERDIERERERERE) are compositionally biased toward basic and acidic residues. The segment covering 633–645 (RDEDDEEELALEV) has biased composition (acidic residues).

The protein belongs to the Antp homeobox family. B-H1 and B-H2 are abundant in the eye-antenna imaginal disk. Expressed in R1 and R6 cells throughout larval stage until 30 hours after puparium formation, at which time expression is seen in the anterior and posterior primary pigment cells. Coexpressed in embryonic glial cells, neurons of the CNS and PNS, most latitudinal anterior cells of the developing notum and the central circular region of the leg and antennal imaginal disk throughout larval development.

It localises to the nucleus. Functionally, B-H1 and B-H2 are regulated by members of the wg signaling pathway; wg and dpp. B-H1 and B-H2 are coexpressed and functionally required in R1 and R6 receptor cells and primary pigment cells for normal eye development. Coexpression is also required for the fate determination of external sensory organs, formation of notal microchaetae, formation of presutural macrochaetae, antennal development and for distal leg morphogenesis; segmentation and specification of tarsal segments 3-5. This Drosophila melanogaster (Fruit fly) protein is Homeobox protein B-H2 (B-H2).